The chain runs to 273 residues: DnaJ homolog subfamily C member 27 (273 aa).

Residues 1–18 (METNVPKRKEPAKSLRIK) are required for interaction with MAPK1. GTP is bound by residues 23–30 (GNAEVGKS), 71–75 (DMAGH), and 134–137 (NKID). Positions 217-273 (DSWEMLGVRPGASREEVNKAYRKLAVLLHPDKCVAPGSEDAFKAVVNARTALLKNIK) constitute a J domain.

The protein belongs to the small GTPase superfamily. Rab family. Interacts directly with MAPK1 (wild-type and kinase-deficient forms). Interacts directly (in GTP-bound form) with MAP2K1 (wild-type and kinase-deficient forms).

Its subcellular location is the nucleus. In terms of biological role, GTPase which can activate the MEK/ERK pathway and induce cell transformation when overexpressed. May act as a nuclear scaffold for MAPK1, probably by association with MAPK1 nuclear export signal leading to enhanced ERK1/ERK2 signaling. The protein is DnaJ homolog subfamily C member 27 (Dnajc27) of Mus musculus (Mouse).